The sequence spans 310 residues: Prostate androgen-regulated mucin-like protein 1 homolog (310 aa).

Positions 1–20 (MVYKTLFALCILTAGWRVQS) are cleaved as a signal peptide. The Extracellular portion of the chain corresponds to 21-258 (LPTSAPLSVS…EVEHALSSGS (238 aa)). Polar residues predominate over residues 40–74 (TIWTSSPQNTDADTASPSNGTHNNSVLPVTASAPT). Residues 40 to 224 (TIWTSSPQNT…VPQEKTPPTT (185 aa)) are disordered. N-linked (GlcNAc...) asparagine glycans are attached at residues Asn58, Asn62, and Asn80. A compositionally biased stretch (polar residues) spans 92-103 (SPGSNWEGTNTD). The span at 150 to 209 (SPQAPASSPSSLSTSPPEVFSVSVTTNHSSTVTSTQPTGAPTAPESPTEESSSDHTPTSH) shows a compositional bias: low complexity. The N-linked (GlcNAc...) asparagine glycan is linked to Asn176. The chain crosses the membrane as a helical span at residues 259-279 (IAAITVTVIAVVLLVFGVAAY). Residues 280-310 (LKIRHSSYGRLLDDHDYGSWGNYNNPLYDDS) lie on the Cytoplasmic side of the membrane. Phosphoserine is present on Ser298.

The protein belongs to the PARM family. In terms of processing, highly N-glycosylated and O-glycosylated.

It localises to the cell membrane. The protein localises to the golgi apparatus membrane. It is found in the endosome membrane. Its function is as follows. May regulate TLP1 expression and telomerase activity, thus enabling certain prostatic cells to resist apoptosis. The polypeptide is Prostate androgen-regulated mucin-like protein 1 homolog (PARM1) (Pongo abelii (Sumatran orangutan)).